A 535-amino-acid chain; its full sequence is CTP synthase (535 aa).

Residues 1 to 267 (MTKYIFVTGG…DQIVCDHLKL (267 aa)) are amidoligase domain. Position 13 (serine 13) interacts with CTP. Serine 13 is a binding site for UTP. 14–19 (SLGKGI) contacts ATP. Residue tyrosine 54 participates in L-glutamine binding. Aspartate 71 is a binding site for ATP. Positions 71 and 141 each coordinate Mg(2+). Residues 148–150 (DIE), 188–193 (KTKPTQ), and lysine 224 each bind CTP. Residues 188 to 193 (KTKPTQ) and lysine 224 contribute to the UTP site. 240 to 242 (RDA) serves as a coordination point for ATP. Residues 292–534 (KIALVGKYVE…VRASITNKES (243 aa)) enclose the Glutamine amidotransferase type-1 domain. Glycine 354 serves as a coordination point for L-glutamine. Residue cysteine 381 is the Nucleophile; for glutamine hydrolysis of the active site. L-glutamine-binding positions include 382–385 (LGMQ), glutamate 405, and arginine 462. Active-site residues include histidine 507 and glutamate 509.

Belongs to the CTP synthase family. In terms of assembly, homotetramer.

It catalyses the reaction UTP + L-glutamine + ATP + H2O = CTP + L-glutamate + ADP + phosphate + 2 H(+). The catalysed reaction is L-glutamine + H2O = L-glutamate + NH4(+). It carries out the reaction UTP + NH4(+) + ATP = CTP + ADP + phosphate + 2 H(+). The protein operates within pyrimidine metabolism; CTP biosynthesis via de novo pathway; CTP from UDP: step 2/2. With respect to regulation, allosterically activated by GTP, when glutamine is the substrate; GTP has no effect on the reaction when ammonia is the substrate. The allosteric effector GTP functions by stabilizing the protein conformation that binds the tetrahedral intermediate(s) formed during glutamine hydrolysis. Inhibited by the product CTP, via allosteric rather than competitive inhibition. Catalyzes the ATP-dependent amination of UTP to CTP with either L-glutamine or ammonia as the source of nitrogen. Regulates intracellular CTP levels through interactions with the four ribonucleotide triphosphates. The protein is CTP synthase of Bacillus cereus (strain ATCC 10987 / NRS 248).